Consider the following 192-residue polypeptide: MNAIWIAVVAVSLLGLAFGAILGYASRRFAVEDDPVVEKIDEILPQSQCGQCGYPGCRPYAEAIGSQGEKINRCAPGGEAVMLKIATLLNVDPQPIDGDEQEVAPVRMLAVIDENNCIGCTKCIQACPVDAIVGATRAMHTVMSDLCTGCNLCVDPCPTQCIELRPVAETPDSWKWDLNTIPVRIIPVEQHA.

The tract at residues 1-26 (MNAIWIAVVAVSLLGLAFGAILGYAS) is hydrophobic. One can recognise a 4Fe-4S domain in the interval 32–91 (EDDPVVEKIDEILPQSQCGQCGYPGCRPYAEAIGSQGEKINRCAPGGEAVMLKIATLLNV). Residues C49, C52, C57, C74, C117, C120, C123, C127, C147, C150, C153, and C157 each coordinate [4Fe-4S] cluster. 2 consecutive 4Fe-4S ferredoxin-type domains span residues 108–137 (MLAV…GATR) and 138–167 (AMHT…LRPV).

Belongs to the 4Fe4S bacterial-type ferredoxin family. RnfB subfamily. In terms of assembly, the complex is composed of six subunits: RnfA, RnfB, RnfC, RnfD, RnfE and RnfG. Requires [4Fe-4S] cluster as cofactor.

The protein resides in the cell inner membrane. Part of a membrane-bound complex that couples electron transfer with translocation of ions across the membrane. In Citrobacter koseri (strain ATCC BAA-895 / CDC 4225-83 / SGSC4696), this protein is Ion-translocating oxidoreductase complex subunit B.